The following is a 457-amino-acid chain: Serine--tRNA ligase (457 aa).

252–254 (TAE) serves as a coordination point for L-serine. ATP-binding positions include 283 to 285 (RKE) and V299. E306 lines the L-serine pocket. Residue 370-373 (EVVS) coordinates ATP. An L-serine-binding site is contributed by T406.

The protein belongs to the class-II aminoacyl-tRNA synthetase family. Type-1 seryl-tRNA synthetase subfamily. As to quaternary structure, homodimer. The tRNA molecule binds across the dimer.

It localises to the cytoplasm. The catalysed reaction is tRNA(Ser) + L-serine + ATP = L-seryl-tRNA(Ser) + AMP + diphosphate + H(+). The enzyme catalyses tRNA(Sec) + L-serine + ATP = L-seryl-tRNA(Sec) + AMP + diphosphate + H(+). It participates in aminoacyl-tRNA biosynthesis; selenocysteinyl-tRNA(Sec) biosynthesis; L-seryl-tRNA(Sec) from L-serine and tRNA(Sec): step 1/1. Its function is as follows. Catalyzes the attachment of serine to tRNA(Ser). Is also able to aminoacylate tRNA(Sec) with serine, to form the misacylated tRNA L-seryl-tRNA(Sec), which will be further converted into selenocysteinyl-tRNA(Sec). This is Serine--tRNA ligase from Thermococcus onnurineus (strain NA1).